Consider the following 251-residue polypeptide: Probable transcriptional regulatory protein SYNPCC7002_A0851 (251 aa).

One can recognise a Response regulatory domain in the interval 20 to 141 (RILVVEDEAV…ELVARCRALL (122 aa)). Position 76 is a 4-aspartylphosphate (Asp-76). The segment at residues 153-251 (NSVRQFKDIS…TVRGFGYRFG (99 aa)) is a DNA-binding region (ompR/PhoB-type).

In terms of processing, phosphorylation.

The protein is Probable transcriptional regulatory protein SYNPCC7002_A0851 of Picosynechococcus sp. (strain ATCC 27264 / PCC 7002 / PR-6) (Agmenellum quadruplicatum).